The following is a 545-amino-acid chain: Chaperonin GroEL (545 aa).

Residues 30 to 33 (TLGP), K51, 87 to 91 (DGTTT), G413, 477 to 479 (NAA), and D493 contribute to the ATP site.

This sequence belongs to the chaperonin (HSP60) family. As to quaternary structure, forms a cylinder of 14 subunits composed of two heptameric rings stacked back-to-back. Interacts with the co-chaperonin GroES.

The protein localises to the cytoplasm. It carries out the reaction ATP + H2O + a folded polypeptide = ADP + phosphate + an unfolded polypeptide.. In terms of biological role, together with its co-chaperonin GroES, plays an essential role in assisting protein folding. The GroEL-GroES system forms a nano-cage that allows encapsulation of the non-native substrate proteins and provides a physical environment optimized to promote and accelerate protein folding. The sequence is that of Chaperonin GroEL from Pseudomonas putida (Arthrobacter siderocapsulatus).